A 205-amino-acid chain; its full sequence is Translation initiation factor 2 subunit beta (205 aa).

The 59-residue stretch at Gly-145 to Asp-203 folds into the TRAM domain.

It belongs to the eIF-2-beta/eIF-5 family. In terms of assembly, heterotrimer composed of an alpha, a beta and a gamma chain.

Its function is as follows. eIF-2 functions in the early steps of protein synthesis by forming a ternary complex with GTP and initiator tRNA. This is Translation initiation factor 2 subunit beta from Picrophilus torridus (strain ATCC 700027 / DSM 9790 / JCM 10055 / NBRC 100828 / KAW 2/3).